The chain runs to 360 residues: 3-dehydroquinate synthase (360 aa).

NAD(+) contacts are provided by residues 71 to 76 (DGEQYK), 105 to 109 (GVIGD), 129 to 130 (TT), lysine 142, lysine 151, and 169 to 172 (CLDT). Positions 184, 247, and 264 each coordinate Zn(2+).

The protein belongs to the sugar phosphate cyclases superfamily. Dehydroquinate synthase family. The cofactor is Co(2+). Zn(2+) serves as cofactor. Requires NAD(+) as cofactor.

The protein resides in the cytoplasm. The catalysed reaction is 7-phospho-2-dehydro-3-deoxy-D-arabino-heptonate = 3-dehydroquinate + phosphate. It functions in the pathway metabolic intermediate biosynthesis; chorismate biosynthesis; chorismate from D-erythrose 4-phosphate and phosphoenolpyruvate: step 2/7. Catalyzes the conversion of 3-deoxy-D-arabino-heptulosonate 7-phosphate (DAHP) to dehydroquinate (DHQ). The protein is 3-dehydroquinate synthase of Erwinia tasmaniensis (strain DSM 17950 / CFBP 7177 / CIP 109463 / NCPPB 4357 / Et1/99).